Here is a 108-residue protein sequence, read N- to C-terminus: UPF0102 protein Tpet_0671 (108 aa).

This sequence belongs to the UPF0102 family.

The chain is UPF0102 protein Tpet_0671 from Thermotoga petrophila (strain ATCC BAA-488 / DSM 13995 / JCM 10881 / RKU-1).